Consider the following 905-residue polypeptide: uncharacterized protein (905 aa).

4 WD repeats span residues 42 to 82 (RSLK…FQAV), 86 to 128 (GYAR…SDPK), 136 to 175 (STLD…DSVS), and 177 to 217 (VNTQ…SDNY). Residues Ser-394 and Ser-397 each carry the phosphoserine modification.

This sequence belongs to the WD repeat mio family.

This is an uncharacterized protein from Schizosaccharomyces pombe (strain 972 / ATCC 24843) (Fission yeast).